A 925-amino-acid chain; its full sequence is Serine/threonine-protein kinase SIK2 (925 aa).

One can recognise a Protein kinase domain in the interval 20-271 (YDIEGTLGKG…IAQIKEHKWM (252 aa)). Phosphothreonine is present on threonine 25. Residues 26–34 (LGKGNFAVV) and lysine 49 each bind ATP. The residue at position 53 (lysine 53) is an N6-acetyllysine; by EP300. The Proton acceptor role is filled by aspartate 142. Phosphothreonine is present on threonine 175. Positions 295-335 (EFNEQVLRLMHSLGIDQQKTIESLQNKSYNHFAAIYFLLVE) constitute a UBA domain. Residue serine 534 is modified to Phosphoserine. The disordered stretch occupies residues 564–586 (ALSSQKREVHNRSPVSFREGRRA). Phosphoserine is present on serine 587. 3 disordered regions span residues 630–674 (PNLA…PRQS), 742–776 (SSYP…PLSP), and 800–895 (QPLP…SSYD). 2 stretches are compositionally biased toward low complexity: residues 648 to 659 (QEEVSQQQESVS) and 742 to 756 (SSYP…LPRQ). Over residues 765-774 (APPFSLTQPL) the composition is skewed to polar residues. A compositionally biased stretch (low complexity) spans 808-820 (PRAAPLPTQLQQQ). Residues 821 to 833 (QPPPPPPPPPPRQ) are compositionally biased toward pro residues.

It belongs to the protein kinase superfamily. CAMK Ser/Thr protein kinase family. SNF1 subfamily. In terms of assembly, interacts with and phosphorylates TORC2/CRTC2. The cofactor is Mg(2+). Phosphorylated at Thr-175 by STK11/LKB1 in complex with STE20-related adapter-alpha (STRADA) pseudo kinase and CAB39. Phosphorylated at Thr-484 in response to insulin in adipocytes. Post-translationally, acetylation at Lys-53 inhibits kinase activity. Deacetylated by HDAC6.

Its subcellular location is the cytoplasm. The protein localises to the endoplasmic reticulum membrane. It carries out the reaction L-seryl-[protein] + ATP = O-phospho-L-seryl-[protein] + ADP + H(+). It catalyses the reaction L-threonyl-[protein] + ATP = O-phospho-L-threonyl-[protein] + ADP + H(+). Its activity is regulated as follows. Activated by phosphorylation on Thr-175. Functionally, serine/threonine-protein kinase that plays a role in many biological processes such as fatty acid oxidation, autophagy, immune response or glucose metabolism. Phosphorylates 'Ser-794' of IRS1 in insulin-stimulated adipocytes, potentially modulating the efficiency of insulin signal transduction. Inhibits CREB activity by phosphorylating and repressing TORCs, the CREB-specific coactivators. Phosphorylates EP300 and thus inhibits its histone acetyltransferase activity. In turn, regulates the DNA-binding ability of several transcription factors such as PPARA or MLXIPL. Also plays a role in thymic T-cell development. This Pongo abelii (Sumatran orangutan) protein is Serine/threonine-protein kinase SIK2 (SIK2).